The sequence spans 149 residues: NPC intracellular cholesterol transporter 2 (149 aa).

Positions 1–19 (MHFLAAAFLLLTLSASALA) are cleaved as a signal peptide. Cystine bridges form between cysteine 27–cysteine 140, cysteine 42–cysteine 47, and cysteine 93–cysteine 99. A glycan (N-linked (GlcNAc...) asparagine) is linked at asparagine 58. At lysine 116 the chain carries N6-acetyllysine.

This sequence belongs to the NPC2 family. In terms of assembly, interacts with NPC1 (via the second lumenal domain) in a cholestrol-dependent manner. Interacts with NUS1/NgBR, the interaction stabilizes NCP2 and regulates cholesterol trafficking. Interacts with DHDDS. Interacts with NEDD4L (via C2 domain). Interacts with NPC1L1. Post-translationally, N-glycosylated. Found in the epididymal fluid as a 19 kDa glycoprotein that is processed during its passage through the epididymis into a 16 kDa protein. In terms of tissue distribution, found in the fluid from the distal caput to cauda epididymis, not detected in the rete testis and the proximal and middle caput epididymal fluids (at protein level).

The protein resides in the secreted. The protein localises to the endoplasmic reticulum. It is found in the lysosome. The enzyme catalyses cholesterol(in) = cholesterol(out). Its function is as follows. Intracellular cholesterol transporter which acts in concert with NPC1 and plays an important role in the egress of cholesterol from the lysosomal compartment. Unesterified cholesterol that has been released from LDLs in the lumen of the late endosomes/lysosomes is transferred by NPC2 to the cholesterol-binding pocket in the N-terminal domain of NPC1. May bind and mobilize cholesterol that is associated with membranes. NPC2 binds cholesterol with a 1:1 stoichiometry. Can bind a variety of sterols, including lathosterol, desmosterol and the plant sterols stigmasterol and beta-sitosterol. The secreted form of NCP2 regulates biliary cholesterol secretion via stimulation of ABCG5/ABCG8-mediated cholesterol transport. This is NPC intracellular cholesterol transporter 2 from Sus scrofa (Pig).